The chain runs to 339 residues: MLDKIKALLQEVENMKAANAEELEALRIKYLSKKGEISALMNDFRNVAADQKREVGKYLNELKETTQSKINELKESFENVQTANDDIDLTRTAYPIELGTRHPLSLVKKEICDIFGRLGFSIAEGPEIEDDWHVFSSLNFAEDHPARDMQDTFFIQHNPDVLLRTHTSSVQTRVMEKQEPPIRIICPGRVYRNEAISYRAHCFFHQVEALYVDKNVSFADLKQALLFFAKEMFSPDTKIRLRPSYFPFTEPSAEMDISCNICGGKGCPFCKGTGWVEILGCGMVDPNVLENCGIDSKVYSGYALGMGIERITNLKYQVKDLRMFSENDVRFLRQFESAN.

Position 250 (Glu-250) interacts with Mg(2+).

It belongs to the class-II aminoacyl-tRNA synthetase family. Phe-tRNA synthetase alpha subunit type 1 subfamily. Tetramer of two alpha and two beta subunits. Requires Mg(2+) as cofactor.

The protein localises to the cytoplasm. The enzyme catalyses tRNA(Phe) + L-phenylalanine + ATP = L-phenylalanyl-tRNA(Phe) + AMP + diphosphate + H(+). The chain is Phenylalanine--tRNA ligase alpha subunit from Parabacteroides distasonis (strain ATCC 8503 / DSM 20701 / CIP 104284 / JCM 5825 / NCTC 11152).